Consider the following 92-residue polypeptide: Tachykinin-2 (92 aa).

The N-terminal stretch at 1 to 22 is a signal peptide; sequence MIRVGLILCCIFIVGVFEASSA. Positions 23–37 are excised as a propeptide; sequence DDILTAHNLIKRSEV. Met-49 bears the Methionine amide mark. A propeptide spanning residues 52 to 92 is cleaved from the precursor; the sequence is SEELTRRLIQHPGSMSETSKRGPPKKGDFNPNELKPESNIC. Residues 61 to 92 form a disordered region; that stretch reads QHPGSMSETSKRGPPKKGDFNPNELKPESNIC.

This sequence belongs to the tachykinin family. In terms of tissue distribution, expressed in the posterior salivary gland and more specifically in the mucus-secreting gland cells.

The protein localises to the secreted. Functionally, tachykinins are active peptides which excite neurons, evoke behavioral responses, are potent vasodilators and secretagogues, and contract (directly or indirectly) many smooth muscles. The sequence is that of Tachykinin-2 from Octopus vulgaris (Common octopus).